The chain runs to 146 residues: Large ribosomal subunit protein uL11 (146 aa).

It belongs to the universal ribosomal protein uL11 family. Part of the ribosomal stalk of the 50S ribosomal subunit. Interacts with L10 and the large rRNA to form the base of the stalk. L10 forms an elongated spine to which L12 dimers bind in a sequential fashion forming a multimeric L10(L12)X complex. Post-translationally, one or more lysine residues are methylated.

Forms part of the ribosomal stalk which helps the ribosome interact with GTP-bound translation factors. This is Large ribosomal subunit protein uL11 from Corynebacterium kroppenstedtii (strain DSM 44385 / JCM 11950 / CIP 105744 / CCUG 35717).